Consider the following 857-residue polypeptide: Blue light receptor lreA (857 aa).

3 PAS domains span residues 306–328 (IIYV…VGQN), 479–542 (LVEN…TTTD), and 608–642 (LSKS…DLMD). The segment at 811–836 (CAICQTKKTPEWRRGPSGERDLCNSC) adopts a GATA-type zinc-finger fold.

Its function is as follows. Transcription factor that acts as a blue light sensor. Plays crucial roles in fungal growth and asexual development. Involved in conidiophore formation, sclerotium production, and conidial stress tolerance. Promotes conidiation by inducing the expression of brlA and abaA. Positively regulates the fungal pathogenicity towards maize. In blue light conditions, inhibits aflatoxin B1 (AFB1) biosynthesis by down-regulating the expression of key genes such as aflA, aflJ, aflH, aflO and aflK. The polypeptide is Blue light receptor lreA (Aspergillus flavus).